Here is a 193-residue protein sequence, read N- to C-terminus: Ribonuclease HII (193 aa).

One can recognise an RNase H type-2 domain in the interval 15–193; sequence CIVAGIDEAG…PYHRRSFRCC (179 aa). A divalent metal cation is bound by residues aspartate 21, glutamate 22, and aspartate 112.

It belongs to the RNase HII family. Requires Mn(2+) as cofactor. Mg(2+) serves as cofactor.

The protein localises to the cytoplasm. It catalyses the reaction Endonucleolytic cleavage to 5'-phosphomonoester.. Endonuclease that specifically degrades the RNA of RNA-DNA hybrids. This chain is Ribonuclease HII, found in Rickettsia conorii (strain ATCC VR-613 / Malish 7).